The chain runs to 1342 residues: MGYSYTEKKRIRKDFGKRPQVLNVPYLLTIQLDSFEKFIQRDPEGQQGLEAAFRSVFPIVSNNGSTELQYVSYKLGEPVFDVRECQIRGTTFAAPLRVNLRLVSYDRDAAPGTIKDIKEQDVYMGEIPLMTDNGTFVINGTERVIVSQLHRSPGVFFDSDKGKTHSSGKVLYNARIIPYRGSWLDFEFDPKDNLFARIDRRRKLPATIILRALGYSTEEILDLFFEKIQFEIQDNKLLMALVPERLRGETASFDIEANGKVYVERGRRITARHIRTLEKDNVTKIDVPTEYIVGKVSAKDYIDLESGELVCPANMEISLDILAKLAQAGYKSIETLFTNDLDFGPYISETLRVDPSSDRLSALVEIYRMMRPGEPPTKEAAEALFDNLFFSAERYDLSAVGRMKFNRSLGLAEGVGNGVLSKEDIVGVMKKLIDIRNGRGEVDDIDHLGNRRIRSVGEMAENQFRIGLVRVERAVKERLSLGDLDAVTPQDLINAKPVSAAVKEFFGSSQLSQFMDQNNPLSEVTHKRRISALGPGGLTRERAGFEVRDVHPTHYGRVCPIETPEGPNIGLINSLSVYARTNNYGFLETPYRKVVDGQVTEEIEYLSAIEEGNYVIAQANASLDEDFRFTDAFVTCRGEHGESGLYRPEEIQYMDVSPQQVVSVAAALIPFLEHDDANRALMGANMQRQAVPTLRADKPLVGTGMEKPIALDSGVAVVAKRGGIIQYVDASRIVVKVNEDETIPGEAGIDIYNLIKYTRSNQNTCINQIPCVNLGEPIGRGEVLADGPSTDLGELALGQNIRVAFMPWNGYNFEDSMLVSERVVQQDRFTTIHIQELSCVARDTKLGAEEITADIPNVGETALSKLDESGIVYVGAEVKGGDILVGKVTPKGETQLTPEEKLLRAIFGEKASDVKDSSLRVPNSVSGTVIDVQVFTRDGVEKDKRALEIEEMQLKEAKKDIAEELEILEAGLFSRVRNLLIDGGVDAKELDRLDRTKWLEQTLNDEAKQNQLEQLAEQYEELRKDFEHKLEVKRGKIIQGDDLAPGVLKVVKVYLAVKRRIQPGDKMAGRHGNKGVISKINPVEDMPYDENGQPVEIVLNPLGVPSRMNIGQILETHLGLAAKGIGEQINRMLKEKQEIEKLRGYIQKAYDLGGGSQKVDLNTFTDEEVMRLAQNLRKGMPLATPVFDGAEEKEIKDLLELGGLPTSGQITLYDGRTGEKFERPVTVGYMYMLKLNHLVDDKMHARSTGSYSLVTQQPLGGKAQFGGQRFGEMEVWALEAYGAAYTLQEMLTVKSDDVNGRTKMYKNIVSGTHQMDPGTPESFNVIMKEIRSLGINIDLDEE.

The protein belongs to the RNA polymerase beta chain family. As to quaternary structure, the RNAP catalytic core consists of 2 alpha, 1 beta, 1 beta' and 1 omega subunit. When a sigma factor is associated with the core the holoenzyme is formed, which can initiate transcription.

It carries out the reaction RNA(n) + a ribonucleoside 5'-triphosphate = RNA(n+1) + diphosphate. Its function is as follows. DNA-dependent RNA polymerase catalyzes the transcription of DNA into RNA using the four ribonucleoside triphosphates as substrates. The sequence is that of DNA-directed RNA polymerase subunit beta from Mannheimia succiniciproducens (strain KCTC 0769BP / MBEL55E).